We begin with the raw amino-acid sequence, 434 residues long: Nuclear distribution protein PAC1 (434 aa).

One can recognise a LisH domain in the interval 8 to 40 (QKDDLHKAMLDYLYANNHTAAFNALKESAGITY). A coiled-coil region spans residues 57-83 (TSVIRLQKKIMELENRNAALQEELSMS). 7 WD repeats span residues 106-147 (GHRA…RTLK), 149-187 (HTKP…KNTK), 191-230 (GHDH…QVRT), 233-272 (GHSE…PKSE), 275-334 (GHEN…MIRN), 337-378 (GHDN…RIVE), and 401-434 (KKVN…IWLP).

This sequence belongs to the WD repeat LIS1/nudF family. Self-associates. Interacts with NDL1 and dynein.

The protein localises to the cytoplasm. It localises to the cytoskeleton. Its subcellular location is the spindle pole. Functionally, positively regulates the activity of the minus-end directed microtubule motor protein dynein. May enhance dynein-mediated microtubule sliding by targeting dynein to the microtubule plus end. Required for nuclear migration during vegetative growth as well as development. Required for retrograde early endosome (EE) transport from the hyphal tip. Required for localization of dynein to the mitotic spindle poles. Recruits additional proteins to the dynein complex at SPBs. In Coprinopsis cinerea (strain Okayama-7 / 130 / ATCC MYA-4618 / FGSC 9003) (Inky cap fungus), this protein is Nuclear distribution protein PAC1.